A 470-amino-acid polypeptide reads, in one-letter code: Acyltransferase BOA11 (470 aa).

H156 (proton acceptor) is an active-site residue.

It belongs to the plant acyltransferase family.

The protein operates within polyketide biosynthesis. Functionally, acyltransferase; part of the gene cluster B that mediates the biosynthesis of botcinic acid and its botcinin derivatives, acetate-derived polyketides that contribute to virulence when combined with the sesquiterpene botrydial. Botcinic acid and its derivatives have been shown to induce chlorosis and necrosis during host plant infection, but also have antifungal activities. Two polyketide synthases, BOA6 and BOA9, are involved in the biosynthesis of botcinins. BOA6 mediates the formation of the per-methylated tetraketide core by condensation of four units of malonyl-CoA with one unit of acetyl-CoA, which would be methylated in activated methylene groups to yield a bicyclic acid intermediate that could then either be converted to botrylactone derivatives or lose the starter acetate unit through a retro-Claisen type C-C bond cleavage to yield botcinin derivatives. The second polyketide synthase, BOA9, is probably required for the biosynthesis of the tetraketide side chain of botcinins. The methyltransferase (MT) domain within BOA6 is probably responsible for the incorporation of four methyl groups. The trans-enoyl reductase BOA5 might take over the enoyl reductase function of BOA6 that misses an ER domain. The monooxygenases BOA2, BOA3 and BOA4 might be involved in further hydroxylations at C4, C5 and C8, whereas BOA7, close to BOA9, could potentially be involved in the hydroxylation at C4 in the side chain of botcinins. The protein is Acyltransferase BOA11 of Botryotinia fuckeliana (strain B05.10) (Noble rot fungus).